The primary structure comprises 134 residues: Profilin-5 (134 aa).

A disulfide bond links Cys-13 and Cys-118. The short motif at 84–100 is the Involved in PIP2 interaction element; that stretch reads AVIRGKKGSGGITIKKT. Phosphothreonine is present on Thr-114.

The protein belongs to the profilin family. Occurs in many kinds of cells as a complex with monomeric actin in a 1:1 ratio. Post-translationally, phosphorylated by MAP kinases.

It is found in the cytoplasm. It localises to the cytoskeleton. Binds to actin and affects the structure of the cytoskeleton. At high concentrations, profilin prevents the polymerization of actin, whereas it enhances it at low concentrations. This chain is Profilin-5, found in Olea europaea (Common olive).